The chain runs to 188 residues: Elongation factor P (188 aa).

This sequence belongs to the elongation factor P family.

Its subcellular location is the cytoplasm. It functions in the pathway protein biosynthesis; polypeptide chain elongation. Involved in peptide bond synthesis. Stimulates efficient translation and peptide-bond synthesis on native or reconstituted 70S ribosomes in vitro. Probably functions indirectly by altering the affinity of the ribosome for aminoacyl-tRNA, thus increasing their reactivity as acceptors for peptidyl transferase. The polypeptide is Elongation factor P (Phocaeicola vulgatus (strain ATCC 8482 / DSM 1447 / JCM 5826 / CCUG 4940 / NBRC 14291 / NCTC 11154) (Bacteroides vulgatus)).